A 395-amino-acid chain; its full sequence is MEHVDSDFAPIRRSKKVVDSDKIVKAISDDLEQKNFTVLRKLNLVPIKKSVSSPKVCKPSPVKERVDHVFYQKFKSMALQELGTNYLSISYVPSLSKFLSKNLRSMKNCIVFFDKVEHIHQYAGIDRAVSETLSLVDINVVIIEMNDYLMKEGIQSSKSKECIESMGQASYSGQLDFEASEKPSNHTSDLMMMVMRKINNDESIDHIVYFKFEQLDKLSTSTIIEPSKLTEFINVLSVLEKSNNIAFKVLIYSNNVSISSLLSTSLKKKLNTKYTVFEMPILTCAQEQEYLKKMIKFTFDSGSKLLQSYNSLVTCQLNNKESNLAIFFEFLKVFPHPFTYLFNAYTEIIVQSRTFDELLDKIRNRLTIKNYPHSAYNFKKNQRLPLKLTRKVHDR.

In terms of assembly, interacts with RIF1 and RAP1 C-terminus.

It is found in the nucleus. The protein resides in the chromosome. Its subcellular location is the telomere. Functionally, involved in transcriptional silencing and telomere length regulation. Its role in telomere length regulation results from either a block in elongation or promoting degradation of the telomere ends. Loss of RIF1 function results in derepression of an HMR silencer, whose ARS consensus element has been deleted, and in the elongation of telomeres. RAP1 may target the binding of RIF1 to silencers and telomeres. The polypeptide is Protein RIF2 (RIF2) (Saccharomyces cerevisiae (strain ATCC 204508 / S288c) (Baker's yeast)).